The chain runs to 787 residues: Endonuclease MutS2 (787 aa).

Residue 334 to 341 participates in ATP binding; it reads GPNTGGKT. One can recognise a Smr domain in the interval 712–787; it reads LDLRGKRYEE…GNGATIVTFK (76 aa).

It belongs to the DNA mismatch repair MutS family. MutS2 subfamily. Homodimer. Binds to stalled ribosomes, contacting rRNA.

Its function is as follows. Endonuclease that is involved in the suppression of homologous recombination and thus may have a key role in the control of bacterial genetic diversity. Functionally, acts as a ribosome collision sensor, splitting the ribosome into its 2 subunits. Detects stalled/collided 70S ribosomes which it binds and splits by an ATP-hydrolysis driven conformational change. Acts upstream of the ribosome quality control system (RQC), a ribosome-associated complex that mediates the extraction of incompletely synthesized nascent chains from stalled ribosomes and their subsequent degradation. Probably generates substrates for RQC. The chain is Endonuclease MutS2 from Latilactobacillus sakei subsp. sakei (strain 23K) (Lactobacillus sakei subsp. sakei).